A 503-amino-acid chain; its full sequence is UDP-N-acetylmuramate--L-alanine ligase (503 aa).

120–126 (GTHGKTS) contributes to the ATP binding site.

The protein belongs to the MurCDEF family.

The protein resides in the cytoplasm. It catalyses the reaction UDP-N-acetyl-alpha-D-muramate + L-alanine + ATP = UDP-N-acetyl-alpha-D-muramoyl-L-alanine + ADP + phosphate + H(+). It functions in the pathway cell wall biogenesis; peptidoglycan biosynthesis. Its function is as follows. Cell wall formation. This is UDP-N-acetylmuramate--L-alanine ligase from Rhodococcus opacus (strain B4).